Reading from the N-terminus, the 430-residue chain is MLDPNLLRNELDAVAEKLARRKFKLDVATLRQHEERRKVLQVETENLQAERNARSKAIGAAKSRGEDIEPLRREVNQLGERLSSAKTELDALQSEIRDYAFSLPNIPDDDVPDGRDENDNQEVSRWGEPRQYDFPIRDHVELGEIAGGLDFAAAVKLTGARFVVMRGQIARLHRALTQFMLDLHTEQHGYVEHYLPYLVNHASLYGTGQLPKFVEDLFHTQPLNEEADTSAYALIPTAEVPLTNLIRDEIIEEDALPLKMTAHTPCFRSEAGSYGRDTRGLIRMHQFDKVEMVQVVKPAQSMQALEEMTSHAEKVLQLLQLPYRKVLLCNGDMAFASCKTYDLEVWLPAQNTYREISSCSNISDFQARRMQARYRSRTDKKPQLVHTLNGSGLAVGRTLVAVLENHQLADGRIAIPAVLQPYMKGLTHIG.

A disordered region spans residues 103 to 127; sequence LPNIPDDDVPDGRDENDNQEVSRWG. 237-239 contacts L-serine; that stretch reads TAE. An ATP-binding site is contributed by 268–270; it reads RSE. Glu291 is a binding site for L-serine. An ATP-binding site is contributed by 355 to 358; sequence EISS. Position 391 (Ser391) interacts with L-serine.

The protein belongs to the class-II aminoacyl-tRNA synthetase family. Type-1 seryl-tRNA synthetase subfamily. Homodimer. The tRNA molecule binds across the dimer.

The protein localises to the cytoplasm. It carries out the reaction tRNA(Ser) + L-serine + ATP = L-seryl-tRNA(Ser) + AMP + diphosphate + H(+). It catalyses the reaction tRNA(Sec) + L-serine + ATP = L-seryl-tRNA(Sec) + AMP + diphosphate + H(+). The protein operates within aminoacyl-tRNA biosynthesis; selenocysteinyl-tRNA(Sec) biosynthesis; L-seryl-tRNA(Sec) from L-serine and tRNA(Sec): step 1/1. In terms of biological role, catalyzes the attachment of serine to tRNA(Ser). Is also able to aminoacylate tRNA(Sec) with serine, to form the misacylated tRNA L-seryl-tRNA(Sec), which will be further converted into selenocysteinyl-tRNA(Sec). This is Serine--tRNA ligase from Sodalis glossinidius (strain morsitans).